The following is a 626-amino-acid chain: Polypeptide N-acetylgalactosaminyltransferase 5 (626 aa).

Residues 1–11 (MIIFKKKAILK) lie on the Cytoplasmic side of the membrane. Residues 12 to 31 (VLLLVPVFWICSLIFFAATS) form a helical; Signal-anchor for type II membrane protein membrane-spanning segment. Residue N32 is glycosylated (N-linked (GlcNAc...) asparagine). The Lumenal segment spans residues 32–626 (NDSSQIGSNN…AIEHGAKPPS (595 aa)). 5 disulfide bridges follow: C165/C399, C390/C466, C502/C521, C544/C557, and C583/C598. Residues 174 to 284 (LPRTSVIICF…EGWMEPLLDR (111 aa)) are catalytic subdomain A. The substrate site is built by D215 and R245. A Mn(2+)-binding site is contributed by D268. Residue S269 participates in substrate binding. Mn(2+) is bound at residue H270. N338 carries an N-linked (GlcNAc...) asparagine glycan. The segment at 345 to 407 (PVRSPTMAGG…PCSHVGHVFR (63 aa)) is catalytic subdomain B. Residue W376 coordinates substrate. H404 is a Mn(2+) binding site. The substrate site is built by R407 and Y412. The region spanning 488-610 (AKGEVRNSAV…DDPYQHWKFK (123 aa)) is the Ricin B-type lectin domain.

Belongs to the glycosyltransferase 2 family. GalNAc-T subfamily. The cofactor is Mn(2+).

It localises to the golgi apparatus membrane. The catalysed reaction is L-seryl-[protein] + UDP-N-acetyl-alpha-D-galactosamine = a 3-O-[N-acetyl-alpha-D-galactosaminyl]-L-seryl-[protein] + UDP + H(+). It carries out the reaction L-threonyl-[protein] + UDP-N-acetyl-alpha-D-galactosamine = a 3-O-[N-acetyl-alpha-D-galactosaminyl]-L-threonyl-[protein] + UDP + H(+). It functions in the pathway protein modification; protein glycosylation. In terms of biological role, catalyzes the initial reaction in O-linked oligosaccharide biosynthesis, the transfer of an N-acetyl-D-galactosamine residue to a serine or threonine residue on the protein receptor. The protein is Polypeptide N-acetylgalactosaminyltransferase 5 (gly-5) of Caenorhabditis elegans.